The chain runs to 1892 residues: Plexin A3 (1892 aa).

The first 20 residues, 1–20 (MRSLWLLVFSFSVLTGTNMA), serve as a signal peptide directing secretion. The region spanning 21–509 (FPMILSERPE…SDKQVSRLPV (489 aa)) is the Sema domain. At 21–1240 (FPMILSERPE…IYSDSTLTLP (1220 aa)) the chain is on the extracellular side. N-linked (GlcNAc...) asparagine glycosylation is present at Asn-68. 9 cysteine pairs are disulfide-bonded: Cys-86/Cys-95, Cys-121/Cys-129, Cys-283/Cys-404, Cys-299/Cys-355, Cys-373/Cys-392, Cys-512/Cys-529, Cys-518/Cys-560, Cys-521/Cys-538, and Cys-532/Cys-544. N-linked (GlcNAc...) asparagine glycosylation is present at Asn-569. A disulfide bridge connects residues Cys-595 and Cys-615. IPT/TIG domains follow at residues 861–955 (PRIT…YSFV), 957–1041 (PSFS…YIYT), 1044–1143 (PNIS…FTYY), and 1146–1232 (PTFE…LHIY). Asn-1183 carries N-linked (GlcNAc...) asparagine glycosylation. Residues 1241–1261 (AIIGIGAGGGVLLIAIIAVLI) form a helical membrane-spanning segment. A coiled-coil region spans residues 1262–1315 (AYKRKTRDADRTLKRLQLQMDNLESRVALECKEAFAELQTDIQELTNDMDGVKI). Over 1262 to 1892 (AYKRKTRDAD…QAINLMSGSS (631 aa)) the chain is Cytoplasmic.

It belongs to the plexin family. Detected in primary motor neurons in the embryonic nervous system.

It localises to the cell membrane. Its function is as follows. Coreceptor for class 3 semaphorins. Necessary for signaling by class 3 semaphorins and subsequent remodeling of the cytoskeleton. Plays a role in axon guidance in the developing nervous system. Class 3 semaphorins bind to a complex composed of a neuropilin and a plexin. The plexin modulates the affinity of the complex for specific semaphorins, and its cytoplasmic domain is required for the activation of down-stream signaling events in the cytoplasm. This Danio rerio (Zebrafish) protein is Plexin A3 (plxna3).